We begin with the raw amino-acid sequence, 1755 residues long: Transposon Ty1-ER1 Gag-Pol polyprotein (1755 aa).

Polar residues-rich tracts occupy residues 1-23 (MESQ…SVTS), 48-60 (TKAN…TPAS), and 127-152 (QSQF…GNTF). Disordered regions lie at residues 1-93 (MESQ…MMTQ), 126-174 (PQSQ…PPPM), and 352-421 (GSRN…SKST). The span at 153–165 (TDSSSADSDMTST) shows a compositional bias: low complexity. The RNA-binding stretch occupies residues 299–401 (NNGIHINNKV…NSKSKTARAH (103 aa)). Low complexity predominate over residues 402-418 (NVSTSNNSPSTDNDSIS). Position 416 is a phosphoserine (Ser416). Asp461 acts as the For protease activity; shared with dimeric partner in catalysis. The integrase-type zinc finger-like stretch occupies residues 583–640 (NVHTSESTRKYPYPFIHRMLAHANAQTIRYSLKNNTITYFNESDVDWSSAIDYQCPDC). The Integrase catalytic domain occupies 660 to 835 (NSYEPFQYLH…AGLDISTLLP (176 aa)). 2 residues coordinate Mg(2+): Asp671 and Asp736. Disordered regions lie at residues 956–1087 (SKAV…ETEK), 1092–1111 (RSPS…NIVP), and 1130–1171 (DLPL…DSNA). Positions 960 to 969 (SPTDSTPPST) are enriched in low complexity. The segment covering 1005–1015 (STPQISNIEST) has biased composition (polar residues). Over residues 1038 to 1053 (ESSHASKSKDFRHSDS) the composition is skewed to basic and acidic residues. 2 stretches are compositionally biased toward polar residues: residues 1054-1082 (YSEN…QISD) and 1101-1111 (PENNSSHNIVP). The Bipartite nuclear localization signal signature appears at 1178-1212 (KKRSLEDNETEIKVSRDTWNTKNMRSLEPPRSKKR). Positions 1338–1476 (NNYYITQLDI…DILGLEIKYQ (139 aa)) constitute a Reverse transcriptase Ty1/copia-type domain. Residues Asp1346, Asp1427, Asp1428, Asp1610, Glu1652, and Asp1685 each contribute to the Mg(2+) site. An RNase H Ty1/copia-type domain is found at 1610-1752 (DASYGNQPYY…IKTFKLLTNK (143 aa)).

The capsid protein forms a homotrimer, from which the VLPs are assembled. The protease is a homodimer, whose active site consists of two apposed aspartic acid residues. Initially, virus-like particles (VLPs) are composed of the structural unprocessed proteins Gag and Gag-Pol, and also contain the host initiator methionine tRNA (tRNA(i)-Met) which serves as a primer for minus-strand DNA synthesis, and a dimer of genomic Ty RNA. Processing of the polyproteins occurs within the particle and proceeds by an ordered pathway, called maturation. First, the protease (PR) is released by autocatalytic cleavage of the Gag-Pol polyprotein yielding capsid protein p45 and a Pol-p154 precursor protein. This cleavage is a prerequisite for subsequent processing of Pol-p154 at the remaining sites to release the mature structural and catalytic proteins. Maturation takes place prior to the RT reaction and is required to produce transposition-competent VLPs.

Its subcellular location is the cytoplasm. It is found in the nucleus. It carries out the reaction DNA(n) + a 2'-deoxyribonucleoside 5'-triphosphate = DNA(n+1) + diphosphate. It catalyses the reaction Endonucleolytic cleavage to 5'-phosphomonoester.. Capsid protein (CA) is the structural component of the virus-like particle (VLP), forming the shell that encapsulates the retrotransposons dimeric RNA genome. The particles are assembled from trimer-clustered units and there are holes in the capsid shells that allow for the diffusion of macromolecules. CA also has nucleocapsid-like chaperone activity, promoting primer tRNA(i)-Met annealing to the multipartite primer-binding site (PBS), dimerization of Ty1 RNA and initiation of reverse transcription. In terms of biological role, the aspartyl protease (PR) mediates the proteolytic cleavages of the Gag and Gag-Pol polyproteins after assembly of the VLP. Functionally, reverse transcriptase/ribonuclease H (RT) is a multifunctional enzyme that catalyzes the conversion of the retro-elements RNA genome into dsDNA within the VLP. The enzyme displays a DNA polymerase activity that can copy either DNA or RNA templates, and a ribonuclease H (RNase H) activity that cleaves the RNA strand of RNA-DNA heteroduplexes during plus-strand synthesis and hydrolyzes RNA primers. The conversion leads to a linear dsDNA copy of the retrotransposon that includes long terminal repeats (LTRs) at both ends. Its function is as follows. Integrase (IN) targets the VLP to the nucleus, where a subparticle preintegration complex (PIC) containing at least integrase and the newly synthesized dsDNA copy of the retrotransposon must transit the nuclear membrane. Once in the nucleus, integrase performs the integration of the dsDNA into the host genome. The polypeptide is Transposon Ty1-ER1 Gag-Pol polyprotein (TY1B-ER1) (Saccharomyces cerevisiae (strain ATCC 204508 / S288c) (Baker's yeast)).